Consider the following 622-residue polypeptide: Neuronal acetylcholine receptor subunit alpha-4 (622 aa).

An N-terminal signal peptide occupies residues Met1–Gly23. Residues His24–Leu237 lie on the Extracellular side of the membrane. An N-linked (GlcNAc...) asparagine glycan is attached at Asn52. Residues Val71 and Glu73 each coordinate Ca(2+). Asn102 carries N-linked (GlcNAc...) asparagine glycosylation. 2 cysteine pairs are disulfide-bonded: Cys156–Cys170 and Cys220–Cys221. Residues Pro238–Leu262 form a helical membrane-spanning segment. Cys266 carries S-palmitoyl cysteine lipidation. 2 helical membrane passes run Ile270–Thr288 and Tyr304–Val325. Residues His326 to Arg595 lie on the Cytoplasmic side of the membrane. Disordered stretches follow at residues Trp380–Gly477 and Gln497–Glu516. The span at Thr390–Ser407 shows a compositional bias: low complexity. 2 stretches are compositionally biased toward polar residues: residues Ser450–Asn472 and Gln497–Ser508. The chain crosses the membrane as a helical span at residues Ile596 to Leu614.

Belongs to the ligand-gated ion channel (TC 1.A.9) family. Acetylcholine receptor (TC 1.A.9.1) subfamily. Alpha-4/CHRNA4 sub-subfamily. In terms of assembly, neuronal AChR is composed of two different types of subunits: alpha and beta. CHRNA4 forms heteropentameric neuronal acetylcholine receptors with CHRNB2 and CHRNB4, as well as CHRNA5 and CHRNB3 as accesory subunits. Found in two major stoichiometric forms, LS (low agonist sensitivity): (CHRNA4)3:(CHRNB2)2 and HS (high agonist sensitivity): (CHRNA4)2:(CHRNB2)3, the two stoichiometric forms differ in their unitary conductance, calcium permeability, ACh sensitivity and potentiation by divalent cation. Cells produce predominantly an (CHRNA4)3:(CHRNB2)2 nAChR. The (CHRNA4)2:(CHRNB2)3 expression is selectively up-regulated by nicotine and has lower single channel conductance and calcium permeability. In the striatum, also forms CHRNA4:CHRNA6:CHRNB2 complexes. Also found in the stoichiometric form: (CHRNA4:CHRNB2)2:CHRNB3.

The protein resides in the synaptic cell membrane. The protein localises to the cell membrane. It catalyses the reaction Ca(2+)(in) = Ca(2+)(out). The enzyme catalyses K(+)(in) = K(+)(out). It carries out the reaction Na(+)(in) = Na(+)(out). Its activity is regulated as follows. Activated by a myriad of ligands such as acetylcholine, cytisine, nicotine, choline and epibatidine. Channel potentiation by calcium is stoichiometry-selective, CHRNA4:CHRNB2 nACh receptor is achieved by calcium association with topographically distinct sites framed by anionic residues within the CHRNA4 subunit and between the CHRNA4 and CHRNB2 subunits. nAChR activity is inhibited by the antagonist alpha-conotoxins BuIA, PnIA, GID and MII, small disulfide-constrained peptides from cone snails. In terms of biological role, component of neuronal acetylcholine receptors (nAChRs) that function as pentameric, ligand-gated cation channels with high calcium permeability among other activities. nAChRs are excitatory neurotrasnmitter receptors formed by a collection of nAChR subunits known to mediate synaptic transmission in the nervous system and the neuromuscular junction. Each nAchR subunit confers differential attributes to channel properties, including activation, deactivation and desensitization kinetics, pH sensitivity, cation permeability, and binding to allosteric modulators. CHRNA4 forms heteropentameric neuronal acetylcholine receptors with CHRNB2 and CHRNB4, as well as CHRNA5 and CHRNB3 as accesory subunits. Is the most abundant nAChR subtype expressed in the central nervous system. Found in two major stoichiometric forms,(CHRNA4)3:(CHRNB2)2 and (CHRNA4)2:(CHRNB2)3, the two stoichiometric forms differ in their unitary conductance, calcium permeability, ACh sensitivity and potentiation by divalent cation. Involved in the modulation of calcium-dependent signaling pathways, influences the release of neurotransmitters, including dopamine, glutamate and GABA. The polypeptide is Neuronal acetylcholine receptor subunit alpha-4 (CHRNA4) (Gallus gallus (Chicken)).